We begin with the raw amino-acid sequence, 387 residues long: Flap endonuclease 1 (387 aa).

Positions 1 to 104 (MGIKGLSQLI…GELEKRKERQ (104 aa)) are N-domain. Asp34 is a binding site for Mg(2+). Arg70 serves as a coordination point for DNA. Asp86, Glu158, Glu160, Asp179, and Asp181 together coordinate Mg(2+). An I-domain region spans residues 122-253 (KMVMWNKRTT…KKALAMIKKY (132 aa)). Residue Glu158 participates in DNA binding. Residues Gly231 and Asp233 each contribute to the DNA site. Asp233 serves as a coordination point for Mg(2+). Positions 332–387 (SSRGKPTQTRLDGFFTPVASSSTTKKKAPAKKDDKKSATDKKRKAADASTSSKKKK) are disordered. The tract at residues 338–346 (TQTRLDGFF) is interaction with PCNA. Basic and acidic residues predominate over residues 361-371 (AKKDDKKSATD). Over residues 378 to 387 (DASTSSKKKK) the composition is skewed to low complexity.

This sequence belongs to the XPG/RAD2 endonuclease family. FEN1 subfamily. In terms of assembly, interacts with PCNA. Three molecules of FEN1 bind to one PCNA trimer with each molecule binding to one PCNA monomer. PCNA stimulates the nuclease activity without altering cleavage specificity. It depends on Mg(2+) as a cofactor. Post-translationally, phosphorylated. Phosphorylation upon DNA damage induces relocalization to the nuclear plasma.

The protein resides in the nucleus. Its subcellular location is the nucleolus. The protein localises to the nucleoplasm. It localises to the mitochondrion. In terms of biological role, structure-specific nuclease with 5'-flap endonuclease and 5'-3' exonuclease activities involved in DNA replication and repair. During DNA replication, cleaves the 5'-overhanging flap structure that is generated by displacement synthesis when DNA polymerase encounters the 5'-end of a downstream Okazaki fragment. It enters the flap from the 5'-end and then tracks to cleave the flap base, leaving a nick for ligation. Also involved in the long patch base excision repair (LP-BER) pathway, by cleaving within the apurinic/apyrimidinic (AP) site-terminated flap. Acts as a genome stabilization factor that prevents flaps from equilibrating into structures that lead to duplications and deletions. Also possesses 5'-3' exonuclease activity on nicked or gapped double-stranded DNA, and exhibits RNase H activity. Also involved in replication and repair of rDNA and in repairing mitochondrial DNA. In Naegleria gruberi (Amoeba), this protein is Flap endonuclease 1.